The following is a 306-amino-acid chain: tRNA dimethylallyltransferase (306 aa).

An ATP-binding site is contributed by 9–16 (GPTAVGKT). Residue 11 to 16 (TAVGKT) coordinates substrate. The tract at residues 34-37 (DSRQ) is interaction with substrate tRNA.

This sequence belongs to the IPP transferase family. As to quaternary structure, monomer. The cofactor is Mg(2+).

The catalysed reaction is adenosine(37) in tRNA + dimethylallyl diphosphate = N(6)-dimethylallyladenosine(37) in tRNA + diphosphate. Catalyzes the transfer of a dimethylallyl group onto the adenine at position 37 in tRNAs that read codons beginning with uridine, leading to the formation of N6-(dimethylallyl)adenosine (i(6)A). The polypeptide is tRNA dimethylallyltransferase (Roseiflexus castenholzii (strain DSM 13941 / HLO8)).